We begin with the raw amino-acid sequence, 137 residues long: Small ribosomal subunit protein uS11 (137 aa).

A compositionally biased stretch (low complexity) spans M1–R11. A disordered region spans residues M1–Q32. Over residues R12–R21 the composition is skewed to basic residues.

This sequence belongs to the universal ribosomal protein uS11 family. In terms of assembly, part of the 30S ribosomal subunit. Interacts with proteins S7 and S18. Binds to IF-3.

In terms of biological role, located on the platform of the 30S subunit, it bridges several disparate RNA helices of the 16S rRNA. Forms part of the Shine-Dalgarno cleft in the 70S ribosome. In Herpetosiphon aurantiacus (strain ATCC 23779 / DSM 785 / 114-95), this protein is Small ribosomal subunit protein uS11.